We begin with the raw amino-acid sequence, 558 residues long: Transcription termination factor MTEF18, mitochondrial (558 aa).

A mitochondrion-targeting transit peptide spans 1 to 58 (MFMVRLKFASISHNFSTVAAKHRRVPSKYKSLAIGKAQQAITDYLHTTRSLSYTHAEQ).

Belongs to the mTERF family.

It localises to the mitochondrion. Its function is as follows. Transcription termination factor involved in the regulation of mitochondrial-encoded gene expression. Essential for normal plant growth and development. The sequence is that of Transcription termination factor MTEF18, mitochondrial from Arabidopsis thaliana (Mouse-ear cress).